A 663-amino-acid polypeptide reads, in one-letter code: UvrABC system protein B (663 aa).

One can recognise a Helicase ATP-binding domain in the interval 30-417 (EGIKAGKRHQ…TDKMVEQIIR (388 aa)). 43-50 (GATGTGKT) serves as a coordination point for ATP. Positions 96–119 (YYDYYQPEAYVPSTDTFIEKDASI) match the Beta-hairpin motif. One can recognise a Helicase C-terminal domain in the interval 434–600 (QIDDLLSEIQ…TINKKIHDLI (167 aa)). Residues 627–662 (QKTIDNIEKEMKQAAKDLDFEKATELRDMLFELKAE) form the UVR domain.

The protein belongs to the UvrB family. As to quaternary structure, forms a heterotetramer with UvrA during the search for lesions. Interacts with UvrC in an incision complex.

The protein localises to the cytoplasm. The UvrABC repair system catalyzes the recognition and processing of DNA lesions. A damage recognition complex composed of 2 UvrA and 2 UvrB subunits scans DNA for abnormalities. Upon binding of the UvrA(2)B(2) complex to a putative damaged site, the DNA wraps around one UvrB monomer. DNA wrap is dependent on ATP binding by UvrB and probably causes local melting of the DNA helix, facilitating insertion of UvrB beta-hairpin between the DNA strands. Then UvrB probes one DNA strand for the presence of a lesion. If a lesion is found the UvrA subunits dissociate and the UvrB-DNA preincision complex is formed. This complex is subsequently bound by UvrC and the second UvrB is released. If no lesion is found, the DNA wraps around the other UvrB subunit that will check the other stand for damage. The sequence is that of UvrABC system protein B from Staphylococcus aureus (strain COL).